The sequence spans 222 residues: Cytochrome b6 (222 aa).

Residues 39–59 (IFYCLGGITLVCFIIQFATGF) traverse the membrane as a helical segment. Position 42 (Cys-42) interacts with heme c. Heme b-binding residues include His-93 and His-107. The next 3 membrane-spanning stretches (helical) occupy residues 97-117 (ASMM…TGGF), 123-143 (LTWM…VTGY), and 193-213 (LHTF…FLMI). 2 residues coordinate heme b: His-194 and His-209.

This sequence belongs to the cytochrome b family. PetB subfamily. In terms of assembly, the 4 large subunits of the cytochrome b6-f complex are cytochrome b6, subunit IV (17 kDa polypeptide, PetD), cytochrome f and the Rieske protein, while the 4 small subunits are PetG, PetL, PetM and PetN. The complex functions as a dimer. Requires heme b as cofactor. Heme c is required as a cofactor.

The protein resides in the cellular thylakoid membrane. Its function is as follows. Component of the cytochrome b6-f complex, which mediates electron transfer between photosystem II (PSII) and photosystem I (PSI), cyclic electron flow around PSI, and state transitions. This is Cytochrome b6 from Rippkaea orientalis (strain PCC 8801 / RF-1) (Cyanothece sp. (strain PCC 8801)).